We begin with the raw amino-acid sequence, 67 residues long: Conotoxin VnMMSK-03 (67 aa).

Positions 1 to 20 (MMSKLGVVLTICLLPFPLTA) are cleaved as a signal peptide. Residues 21–50 (LPMDGDQPADLPALRTQDFEPERSPWFDPV) constitute a propeptide that is removed on maturation. 3 disulfides stabilise this stretch: cysteine 53/cysteine 65, cysteine 54/cysteine 61, and cysteine 58/cysteine 64. Proline 63 carries the post-translational modification 4-hydroxyproline.

It belongs to the conotoxin M superfamily. Expressed by the venom duct.

The protein resides in the secreted. This is Conotoxin VnMMSK-03 from Conus ventricosus (Mediterranean cone).